A 371-amino-acid chain; its full sequence is Chaperone protein DnaJ (371 aa).

The 65-residue stretch at aspartate 5–glycine 69 folds into the J domain. The CR-type zinc finger occupies glycine 127–proline 205. Zn(2+) is bound by residues cysteine 140, cysteine 143, cysteine 157, cysteine 160, cysteine 179, cysteine 182, cysteine 193, and cysteine 196. CXXCXGXG motif repeat units lie at residues cysteine 140–glycine 147, cysteine 157–glycine 164, cysteine 179–glycine 186, and cysteine 193–glycine 200.

This sequence belongs to the DnaJ family. As to quaternary structure, homodimer. The cofactor is Zn(2+).

Its subcellular location is the cytoplasm. Functionally, participates actively in the response to hyperosmotic and heat shock by preventing the aggregation of stress-denatured proteins and by disaggregating proteins, also in an autonomous, DnaK-independent fashion. Unfolded proteins bind initially to DnaJ; upon interaction with the DnaJ-bound protein, DnaK hydrolyzes its bound ATP, resulting in the formation of a stable complex. GrpE releases ADP from DnaK; ATP binding to DnaK triggers the release of the substrate protein, thus completing the reaction cycle. Several rounds of ATP-dependent interactions between DnaJ, DnaK and GrpE are required for fully efficient folding. Also involved, together with DnaK and GrpE, in the DNA replication of plasmids through activation of initiation proteins. The protein is Chaperone protein DnaJ of Hamiltonella defensa subsp. Acyrthosiphon pisum (strain 5AT).